Here is a 160-residue protein sequence, read N- to C-terminus: Nucleotide-binding protein BAV0791 (160 aa).

This sequence belongs to the YajQ family.

Nucleotide-binding protein. This Bordetella avium (strain 197N) protein is Nucleotide-binding protein BAV0791.